The primary structure comprises 234 residues: UPF0758 protein Rfer_3252 (234 aa).

In terms of domain architecture, MPN spans 112–234 (IFATPDAVKH…ALSMAERGLL (123 aa)). Histidine 183, histidine 185, and aspartate 196 together coordinate Zn(2+). Residues 183–196 (HNHPSGTVQPSRAD) carry the JAMM motif motif.

The protein belongs to the UPF0758 family.

This chain is UPF0758 protein Rfer_3252, found in Albidiferax ferrireducens (strain ATCC BAA-621 / DSM 15236 / T118) (Rhodoferax ferrireducens).